A 120-amino-acid polypeptide reads, in one-letter code: UPF0231 protein YacL (120 aa).

It belongs to the UPF0231 family.

The protein is UPF0231 protein YacL of Salmonella typhi.